An 84-amino-acid chain; its full sequence is Small ribosomal subunit protein bS20 (84 aa).

It belongs to the bacterial ribosomal protein bS20 family.

In terms of biological role, binds directly to 16S ribosomal RNA. The polypeptide is Small ribosomal subunit protein bS20 (Latilactobacillus sakei subsp. sakei (strain 23K) (Lactobacillus sakei subsp. sakei)).